The following is a 735-amino-acid chain: Serine/threonine-protein kinase BRSK2 (735 aa).

Positions 20–271 (YRLEKTLGKG…LEHIQKHIWY (252 aa)) constitute a Protein kinase domain. Residues 26–34 (LGKGQTGLV) and lysine 49 contribute to the ATP site. The active-site Proton acceptor is the aspartate 142. Residue threonine 175 is modified to Phosphothreonine; by LKB1. Phosphothreonine; by PKA is present on threonine 261. A Phosphoserine modification is found at serine 295. Residues 298–340 (DIDPDVLDSMHSLGCFRDRNKLLQDLLSEEENQEKMIYFLLLD) form the UBA domain. Residues 346-367 (PSHEDEDLPPRNEIDPPRKRVD) show a composition bias toward basic and acidic residues. 3 disordered regions span residues 346-476 (PSHE…GVPW), 493-514 (FHRRKLQVPTPEEMSNLTPESS), and 682-735 (KNGQ…REQP). Phosphoserine occurs at positions 368, 383, 394, 413, 417, 424, and 428. The span at 411–429 (SRSISGASSGLSTSPLSSP) shows a compositional bias: low complexity. The span at 432-446 (TPHPSPRGSPLPTPK) shows a compositional bias: pro residues. Serine 456 carries the post-translational modification Phosphoserine. Phosphothreonine occurs at positions 460, 464, and 510. Serine 513 and serine 514 each carry phosphoserine.

This sequence belongs to the protein kinase superfamily. CAMK Ser/Thr protein kinase family. SNF1 subfamily. Interacts with FZR1, a regulatory subunit of the APC ubiquitin ligase complex. Interacts with COPS5. Interacts with PAK1. It depends on Mg(2+) as a cofactor. Post-translationally, may be phosphorylated at Thr-261 by PKA. Phosphorylated at Thr-175 by STK11/LKB1 in complex with STE20-related adapter-alpha (STRADA) pseudo kinase and CAB39. Not phosphorylated at Thr-175 by CaMKK2. In contrast, it is phosphorylated and activated by CaMKK1. May be inactivated via dephosphorylation of Thr-175 by PP2C. Polyubiquitinated by the APC complex in conjunction with FZR1, leading to its proteasomal degradation. Targeted for proteasomal degradation by interaction with COPS5. BRSK2 levels change during the cell cycle. BRSK2 levels are low at the G1/S boundary and gradually increase as cells progress into G2 phase. BRSK2 levels decrease rapidly at the end of mitosis.

It localises to the cytoplasm. Its subcellular location is the cytoskeleton. It is found in the microtubule organizing center. The protein resides in the centrosome. The protein localises to the perinuclear region. It localises to the endoplasmic reticulum. The catalysed reaction is L-seryl-[protein] + ATP = O-phospho-L-seryl-[protein] + ADP + H(+). The enzyme catalyses L-threonyl-[protein] + ATP = O-phospho-L-threonyl-[protein] + ADP + H(+). It carries out the reaction L-seryl-[tau protein] + ATP = O-phospho-L-seryl-[tau protein] + ADP + H(+). It catalyses the reaction L-threonyl-[tau protein] + ATP = O-phospho-L-threonyl-[tau protein] + ADP + H(+). With respect to regulation, activated by phosphorylation on Thr-175 by STK11/LKB1. Functionally, serine/threonine-protein kinase that plays a key role in polarization of neurons and axonogenesis, cell cycle progress and insulin secretion. Phosphorylates CDK16, CDC25C, MAPT/TAU, PAK1 and WEE1. Following phosphorylation and activation by STK11/LKB1, acts as a key regulator of polarization of cortical neurons, probably by mediating phosphorylation of microtubule-associated proteins such as MAPT/TAU at 'Thr-523' and 'Ser-573'. Also regulates neuron polarization by mediating phosphorylation of WEE1 at 'Ser-642' in post-mitotic neurons, leading to down-regulate WEE1 activity in polarized neurons. Plays a role in the regulation of the mitotic cell cycle progress and the onset of mitosis. Plays a role in the regulation of insulin secretion in response to elevated glucose levels, probably via phosphorylation of CDK16 and PAK1. While BRSK2 phosphorylated at Thr-175 can inhibit insulin secretion, BRSK2 phosphorylated at Thr-261 can promote insulin secretion. Regulates reorganization of the actin cytoskeleton. May play a role in the apoptotic response triggered by endoplasmic reticulum (ER) stress. The polypeptide is Serine/threonine-protein kinase BRSK2 (Brsk2) (Rattus norvegicus (Rat)).